A 168-amino-acid chain; its full sequence is uncharacterized protein (168 aa).

4Fe-4S ferredoxin-type domains are found at residues 48 to 78 (KIPKTVIEELCIGCEGCANVCPTKAIEMIPI) and 91 to 122 (KIPKINPEKCVYCLYCHDFCPVFSVFNEISPI). Residues cysteine 58, cysteine 61, cysteine 64, cysteine 68, cysteine 100, cysteine 103, cysteine 106, and cysteine 110 each contribute to the [4Fe-4S] cluster site.

This is an uncharacterized protein from Methanocaldococcus jannaschii (strain ATCC 43067 / DSM 2661 / JAL-1 / JCM 10045 / NBRC 100440) (Methanococcus jannaschii).